The sequence spans 149 residues: Large ribosomal subunit protein uL13 (149 aa).

The protein belongs to the universal ribosomal protein uL13 family. As to quaternary structure, part of the 50S ribosomal subunit.

This protein is one of the early assembly proteins of the 50S ribosomal subunit, although it is not seen to bind rRNA by itself. It is important during the early stages of 50S assembly. This is Large ribosomal subunit protein uL13 from Chlamydia pneumoniae (Chlamydophila pneumoniae).